The chain runs to 438 residues: Ribosomal protein uS12 methylthiotransferase RimO (438 aa).

The MTTase N-terminal domain maps to 5 to 116; sequence PTIAISHLGC…IVQVIQRVEN (112 aa). [4Fe-4S] cluster-binding residues include Cys14, Cys50, Cys79, Cys154, Cys158, and Cys161. The region spanning 140–369 is the Radical SAM core domain; it reads TTSEGVAYLR…MQIQQPISLQ (230 aa). A TRAM domain is found at 372-438; it reads CACIGDIVDV…IYDLYGEVIN (67 aa).

This sequence belongs to the methylthiotransferase family. RimO subfamily. Requires [4Fe-4S] cluster as cofactor.

It localises to the cytoplasm. The enzyme catalyses L-aspartate(89)-[ribosomal protein uS12]-hydrogen + (sulfur carrier)-SH + AH2 + 2 S-adenosyl-L-methionine = 3-methylsulfanyl-L-aspartate(89)-[ribosomal protein uS12]-hydrogen + (sulfur carrier)-H + 5'-deoxyadenosine + L-methionine + A + S-adenosyl-L-homocysteine + 2 H(+). In terms of biological role, catalyzes the methylthiolation of an aspartic acid residue of ribosomal protein uS12. The chain is Ribosomal protein uS12 methylthiotransferase RimO from Gloeothece citriformis (strain PCC 7424) (Cyanothece sp. (strain PCC 7424)).